Consider the following 176-residue polypeptide: MASQKHSRGHGSKQMATASTYDHSRHGYGAHGRHRDSGLLDSLGRFFGGERSVPRKGSGKEVHMSRSGYLSSSPQRSPYHAHGRHVDDNPVVHFFRNIVSPRTPPPSQPKRGFSRFSWGAENHKPYYGGYGSRSLEHHKSSYKGYKDPHREGHGSLSRIFKLGGQRSRSSSPMARR.

Residues 1 to 11 (MASQKHSRGHG) show a composition bias toward basic residues. A disordered region spans residues 1-176 (MASQKHSRGH…SRSSSPMARR (176 aa)). Alanine 2 carries the N-acetylalanine modification. Serine 7 carries the post-translational modification Phosphoserine. Residues arginine 25 and arginine 33 each carry the citrulline modification. A Phosphoserine modification is found at serine 58. Residue asparagine 97 is modified to Deamidated asparagine. Threonine 103 bears the Phosphothreonine mark. Glutamine 108 carries the post-translational modification Deamidated glutamine. A Symmetric dimethylarginine modification is found at arginine 111. Serine 117 carries the phosphoserine modification. Residues 134 to 153 (SLEHHKSSYKGYKDPHREGH) show a composition bias toward basic and acidic residues. Over residues 166–176 (RSRSSSPMARR) the composition is skewed to polar residues. A phosphoserine mark is found at serine 167 and serine 171. Arginine 176 carries the post-translational modification Citrulline.

This sequence belongs to the myelin basic protein family. In terms of assembly, homodimer. As in other animals, several charge isomers may be produced as a result of optional post-translational modifications, such as phosphorylation of serine or threonine residues, deamidation of glutamine or asparagine residues, citrullination and methylation of arginine residues.

Its subcellular location is the myelin membrane. Is, with PLP, the most abundant protein component of the myelin membrane in the CNS. Plays a role in both the formation and stabilization of this compact multilayer arrangement of bilayers. Each splice variant and charge isomer may have a specialized function in the assembly of an optimized, biochemically functional myelin membrane. This is Myelin basic protein (mbp) from Xenopus laevis (African clawed frog).